A 712-amino-acid chain; its full sequence is Elongation factor G (712 aa).

The tr-type G domain maps to T8 to T290. Residues A17–T24, D88–H92, and N142–D145 each bind GTP.

This sequence belongs to the TRAFAC class translation factor GTPase superfamily. Classic translation factor GTPase family. EF-G/EF-2 subfamily.

Its subcellular location is the cytoplasm. Catalyzes the GTP-dependent ribosomal translocation step during translation elongation. During this step, the ribosome changes from the pre-translocational (PRE) to the post-translocational (POST) state as the newly formed A-site-bound peptidyl-tRNA and P-site-bound deacylated tRNA move to the P and E sites, respectively. Catalyzes the coordinated movement of the two tRNA molecules, the mRNA and conformational changes in the ribosome. In Acinetobacter baumannii (strain SDF), this protein is Elongation factor G.